The primary structure comprises 323 residues: Olfactory receptor 6T1 (323 aa).

The Extracellular segment spans residues 1-25 (MNPENWTQVTSFVLLGFPSSHLIQF). N-linked (GlcNAc...) asparagine glycosylation is present at N5. Residues 26 to 46 (LVFLGLMVTYIVTATGKLLII) form a helical membrane-spanning segment. The Cytoplasmic segment spans residues 47-54 (VLSWIDQR). A helical transmembrane segment spans residues 55 to 75 (LHIQMYFFLRNFSFLELLLVT). Over 76 to 99 (VVVPKMLVVILTGDHTISFVSCII) the chain is Extracellular. A disulfide bond links C97 and C189. A helical membrane pass occupies residues 100 to 120 (QSYLYFFLGTTDFFLLAVMSL). Topologically, residues 121-139 (DRYLAICRPLRYETLMNGH) are cytoplasmic. The chain crosses the membrane as a helical span at residues 140–160 (VCSQLVLASWLAGFLWVLCPT). At 161–197 (VLMASLPFCGPNGIDHFFRDSWPLLRLSCGDTHLLKL) the chain is on the extracellular side. Residues 198 to 217 (VAFMLSTLVLLGSLALTSVS) form a helical membrane-spanning segment. The Cytoplasmic segment spans residues 218–237 (YACILATVLRAPTAAERRKA). The chain crosses the membrane as a helical span at residues 238–258 (FSTCASHLTVVVIIYGSSIFL). The Extracellular portion of the chain corresponds to 259 to 271 (YIRMSEAQSKLLN). Residues 272 to 292 (KGASVLSCIITPLLNPFIFTL) traverse the membrane as a helical segment. The Cytoplasmic segment spans residues 293–323 (RNDKVQQALREALGWPRLTAVMKLRVTSQRK).

This sequence belongs to the G-protein coupled receptor 1 family.

Its subcellular location is the cell membrane. Functionally, odorant receptor. This chain is Olfactory receptor 6T1 (OR6T1), found in Homo sapiens (Human).